A 562-amino-acid chain; its full sequence is Calmodulin-binding protein 60 F (562 aa).

The tract at residues 1 to 22 (MENSMNNRGHGHNQEHADNLPE) is disordered. The interval 5–84 (MNNRGHGHNQ…STSRSTEPNK (80 aa)) is calmodulin-binding. The span at 12–22 (HNQEHADNLPE) shows a compositional bias: basic and acidic residues. Positions 154–273 (EDDKDWTREH…ALHKKLLKSN (120 aa)) are DNA-binding.

This sequence belongs to the plant ACBP60 protein family. As to quaternary structure, interacts with calmodulin (CaM).

Its subcellular location is the nucleus. Functionally, transcription activator that binds DNA in a sequence-specific manner, likely 5'-GAAATTTTGG-3', to promote the expression of target genes. This Arabidopsis thaliana (Mouse-ear cress) protein is Calmodulin-binding protein 60 F.